The primary structure comprises 359 residues: 3-isopropylmalate dehydrogenase (359 aa).

76 to 89 serves as a coordination point for NAD(+); it reads GPKWDTIERSIRPE. Residues Arg-96, Arg-106, Arg-134, and Asp-225 each contribute to the substrate site. Mg(2+) contacts are provided by Asp-225, Asp-249, and Asp-253. 283-295 provides a ligand contact to NAD(+); it reads GSAPDIAGQNVAN.

It belongs to the isocitrate and isopropylmalate dehydrogenases family. LeuB type 1 subfamily. Homodimer. The cofactor is Mg(2+). It depends on Mn(2+) as a cofactor.

It is found in the cytoplasm. The catalysed reaction is (2R,3S)-3-isopropylmalate + NAD(+) = 4-methyl-2-oxopentanoate + CO2 + NADH. Its pathway is amino-acid biosynthesis; L-leucine biosynthesis; L-leucine from 3-methyl-2-oxobutanoate: step 3/4. Catalyzes the oxidation of 3-carboxy-2-hydroxy-4-methylpentanoate (3-isopropylmalate) to 3-carboxy-4-methyl-2-oxopentanoate. The product decarboxylates to 4-methyl-2 oxopentanoate. This Acinetobacter baylyi (strain ATCC 33305 / BD413 / ADP1) protein is 3-isopropylmalate dehydrogenase.